Consider the following 134-residue polypeptide: Lymphocyte antigen 6S (134 aa).

An N-terminal signal peptide occupies residues 1-26 (MSSLQAMKTLSLVLLVALLSMERAQG). Residues 28–76 (RCYRCLAVLEGASCSVVSCPFLDGVCVSQKVSVFGSKVRGENKLSLLSC) form the UPAR/Ly6 domain. 4 disulfides stabilise this stretch: cysteine 29–cysteine 53, cysteine 32–cysteine 41, cysteine 76–cysteine 98, and cysteine 99–cysteine 104. Asparagine 105 carries GPI-anchor amidated asparagine lipidation. A propeptide spans 106-134 (AVVLAASSPWALCVQLLLSLGSVFLWALL) (removed in mature form).

Its subcellular location is the cell membrane. The sequence is that of Lymphocyte antigen 6S from Homo sapiens (Human).